The primary structure comprises 182 residues: Bifunctional protein PyrR (182 aa).

The short motif at 99 to 111 (VVLVDDVLFTGRT) is the PRPP-binding element.

It belongs to the purine/pyrimidine phosphoribosyltransferase family. PyrR subfamily.

It catalyses the reaction UMP + diphosphate = 5-phospho-alpha-D-ribose 1-diphosphate + uracil. Regulates the transcription of the pyrimidine nucleotide (pyr) operon in response to exogenous pyrimidines. Functionally, also displays a weak uracil phosphoribosyltransferase activity which is not physiologically significant. This is Bifunctional protein PyrR from Chloroflexus aurantiacus (strain ATCC 29366 / DSM 635 / J-10-fl).